The primary structure comprises 132 residues: Vesicle transport protein GOT1A (132 aa).

Residues 1–9 (MISITEWQK) are Cytoplasmic-facing. Residues 10–30 (IGVGITGFGIFFILFGTLLYF) form a helical membrane-spanning segment. A topological domain (lumenal) is located at residue D31. The chain crosses the membrane as a helical span at residues 32 to 52 (SVLLAFGNLLFLTGLSLIIGL). Over 53 to 68 (RKTFWFFFQRHKLKGT) the chain is Cytoplasmic. The helical transmembrane segment at 69 to 89 (SFLLGGVVIVLLRWPLLGMFL) threads the bilayer. Topologically, residues 90–100 (ETYGFFSLFKG) are lumenal. The chain crosses the membrane as a helical span at residues 101–121 (FFPVAFGFLGNVCNIPFLGAL). Residues 122 to 132 (FRRLQGTSSMV) lie on the Cytoplasmic side of the membrane.

It belongs to the GOT1 family.

The protein resides in the golgi apparatus membrane. Its function is as follows. May be involved in fusion of ER-derived transport vesicles with the Golgi complex. The chain is Vesicle transport protein GOT1A from Homo sapiens (Human).